The primary structure comprises 1450 residues: Phospholipase B1, membrane-associated (1450 aa).

Residues 1–27 form the signal peptide; sequence MESWPGVSLVGLLLLLLLGQGPSQIHG. The Extracellular segment spans residues 28 to 1422; it reads SSGENTSQPQ…KAKENSNTLY (1395 aa). Asparagine 32, asparagine 45, and asparagine 179 each carry an N-linked (GlcNAc...) asparagine glycan. Tandem repeats lie at residues 41-351, 366-711, and 712-1058. The segment at 41-1407 is 4 X 308-326 AA approximate repeats; the sequence is RTLKNFSFPC…NPFLYTVRNS (1367 aa). Active-site residues include serine 404, aspartate 518, and histidine 659. Asparagine 699 is a glycosylation site (N-linked (GlcNAc...) asparagine). Residues 708-720 are compositionally biased toward polar residues; that stretch reads TKNSNLGHGTSMS. The segment at 708–734 is disordered; sequence TKNSNLGHGTSMSCEEKAPSASPPTSV. 10 N-linked (GlcNAc...) asparagine glycosylation sites follow: asparagine 787, asparagine 801, asparagine 844, asparagine 880, asparagine 926, asparagine 1059, asparagine 1226, asparagine 1280, asparagine 1383, and asparagine 1387. Repeat 4 spans residues 1068–1407; it reads IENWGSDFLC…NPFLYTVRNS (340 aa). Residues 1408–1450 form a necessary for membrane localization region; sequence QILLDKAKENSNTLYWAVPVAAVGGLVVGILGMMLWRTVRLVQ. Residues 1423 to 1443 traverse the membrane as a helical segment; it reads WAVPVAAVGGLVVGILGMMLW. The Cytoplasmic portion of the chain corresponds to 1444-1450; the sequence is RTVRLVQ.

It belongs to the 'GDSL' lipolytic enzyme family. Phospholipase B1 subfamily. Undergoes proteolytic cleavage in the ileum. As to expression, expressed in the ileum mucosa, Paneth cells spermatocytes, spermatids and sperm (at protein level). Expressed in the ileum, jejunum, esophagus and testis.

The protein localises to the apical cell membrane. It carries out the reaction a 1,2-diacyl-sn-glycero-3-phosphocholine + H2O = a 1-acyl-sn-glycero-3-phosphocholine + a fatty acid + H(+). The catalysed reaction is a 1-O-alkyl-2-acyl-sn-glycero-3-phosphocholine + H2O = a 1-O-alkyl-sn-glycero-3-phosphocholine + a fatty acid + H(+). It catalyses the reaction a 1-acyl-sn-glycero-3-phosphocholine + H2O = sn-glycerol 3-phosphocholine + a fatty acid + H(+). The enzyme catalyses a triacylglycerol + H2O = a diacylglycerol + a fatty acid + H(+). It carries out the reaction 1,2-dihexadecanoyl-sn-glycero-3-phosphocholine + H2O = 1-hexadecanoyl-sn-glycero-3-phosphocholine + hexadecanoate + H(+). The catalysed reaction is 1-hexadecanoyl-2-(9Z-octadecenoyl)-sn-glycero-3-phosphocholine + H2O = 1-hexadecanoyl-sn-glycero-3-phosphocholine + (9Z)-octadecenoate + H(+). It catalyses the reaction 1,2-di-(9Z-octadecenoyl)-sn-glycero-3-phosphocholine + H2O = 1-(9Z-octadecenoyl)-sn-glycero-3-phosphocholine + (9Z)-octadecenoate + H(+). The enzyme catalyses 1-hexadecanoyl-2-(9Z,12Z-octadecadienoyl)-sn-glycero-3-phosphocholine + H2O = (9Z,12Z)-octadecadienoate + 1-hexadecanoyl-sn-glycero-3-phosphocholine + H(+). It carries out the reaction 1-hexadecanoyl-2-(9Z,12Z-octadecadienoyl)-sn-glycero-3-phosphocholine + H2O = 2-(9Z,12Z-octadecadienoyl)-sn-glycero-3-phosphocholine + hexadecanoate + H(+). The catalysed reaction is 1-hexadecanoyl-2-(9Z-octadecenoyl)-sn-glycero-3-phosphoethanolamine + H2O = 1-hexadecanoyl-sn-glycero-3-phosphoethanolamine + (9Z)-octadecenoate + H(+). It catalyses the reaction 1-hexadecanoyl-2-(9Z-octadecenoyl)-sn-glycero-3-phospho-(1'-sn-glycerol) + H2O = 1-hexadecanoyl-sn-glycero-3-phospho-(1'-sn-glycerol) + (9Z)-octadecenoate + H(+). The enzyme catalyses 1,2-dihexadecanoyl-sn-glycero-3-phosphocholine + 2 H2O = sn-glycerol 3-phosphocholine + 2 hexadecanoate + 2 H(+). It carries out the reaction 1-O-hexadecyl-2-(9Z)-octadecenoyl-sn-glycero-3-phosphocholine + H2O = 1-O-hexadecyl-sn-glycero-3-phosphocholine + (9Z)-octadecenoate + H(+). The catalysed reaction is 1-hexadecanoyl-sn-glycero-3-phosphocholine + H2O = sn-glycerol 3-phosphocholine + hexadecanoate + H(+). It catalyses the reaction 1,2,3-tri-(9Z-octadecenoyl)-glycerol + H2O = di-(9Z)-octadecenoylglycerol + (9Z)-octadecenoate + H(+). The enzyme catalyses 1-hexadecanoyl-2-(9Z)-octadecenoyl-3-octadecanoyl-sn-glycerol + H2O = 1-hexadecanoyl-2-(9Z-octadecenoyl)-sn-glycerol + octadecanoate + H(+). It carries out the reaction 1,3-dihexadecanoyl-2-(9Z-octadecenoyl)glycerol + H2O = 1,3-dihexadecanoylglycerol + (9Z)-octadecenoate + H(+). The catalysed reaction is 1,3-dihexadecanoyl-2-(9Z-octadecenoyl)glycerol + H2O = 1-hexadecanoyl-2-(9Z-octadecenoyl)-glycerol + hexadecanoate + H(+). It catalyses the reaction 1-hexadecanoyl-2-(9Z)-octadecenoyl-3-octadecanoyl-sn-glycerol + H2O = 1-hexadecanoyl-3-octadecanoyl-sn-glycerol + (9Z)-octadecenoate + H(+). The enzyme catalyses 1-hexadecanoyl-2-(9Z)-octadecenoyl-3-octadecanoyl-sn-glycerol + H2O = 2-(9Z-octadecenoyl)-3-octadecanoyl-sn-glycerol + hexadecanoate + H(+). It carries out the reaction 1-octadecanoyl-2-(9Z,12Z)-octadecadienoyl-sn-glycerol + H2O = 1-octadecanoyl-sn-glycerol + (9Z,12Z)-octadecadienoate + H(+). The catalysed reaction is 1,2-di-(9Z-octadecenoyl)-sn-glycerol + H2O = 1-(9Z-octadecenoyl)-sn-glycerol + (9Z)-octadecenoate + H(+). It catalyses the reaction 2,3-di-(9Z)-octadecenoyl-sn-glycerol + H2O = 3-(9Z-octadecenoyl)-sn-glycerol + (9Z)-octadecenoate + H(+). The enzyme catalyses 1,3-di-(9Z-octadecenoyl)-glycerol + H2O = 1-(9Z-octadecenoyl)-glycerol + (9Z)-octadecenoate + H(+). It carries out the reaction 1-(9Z-octadecenoyl)-glycerol + H2O = glycerol + (9Z)-octadecenoate + H(+). The catalysed reaction is 2-(9Z-octadecenoyl)-glycerol + H2O = glycerol + (9Z)-octadecenoate + H(+). Up-regulated by bile acids such as deoxycholate. Inhibited by diisopropyl fluorophosphate. Functionally, calcium-independent membrane-associated phospholipase that catalyzes complete diacylation of phospholipids by hydrolyzing both sn-1 and sn-2 fatty acyl chains attached to the glycerol backbone (phospholipase B activity). Has dual phospholipase and lysophospholipase activities toward diacylphospholipids. Preferentially cleaves sn-2 ester bonds over sn-1 bonds. Acts as a lipase toward glycerolipid substrates. Hydrolyzes fatty acyl chains of diacylglycerols with preference for the sn-2 position and of triacylglycerols with not positional selectivity. May also hydrolyze long chain retinyl esters such as retinyl palmitate. May contribute to digestion of dietary phospholipids, glycerolipids and retinoids, facilitating lipid absorption at the brush border. The polypeptide is Phospholipase B1, membrane-associated (Plb1) (Rattus norvegicus (Rat)).